A 245-amino-acid polypeptide reads, in one-letter code: tRNA (guanine-N(1)-)-methyltransferase (245 aa).

Residues Gly-111 and 131-136 (MGDYVL) each bind S-adenosyl-L-methionine.

It belongs to the RNA methyltransferase TrmD family. In terms of assembly, homodimer.

Its subcellular location is the cytoplasm. It carries out the reaction guanosine(37) in tRNA + S-adenosyl-L-methionine = N(1)-methylguanosine(37) in tRNA + S-adenosyl-L-homocysteine + H(+). Functionally, specifically methylates guanosine-37 in various tRNAs. The sequence is that of tRNA (guanine-N(1)-)-methyltransferase from Staphylococcus epidermidis (strain ATCC 35984 / DSM 28319 / BCRC 17069 / CCUG 31568 / BM 3577 / RP62A).